Here is a 100-residue protein sequence, read N- to C-terminus: Noncompact myelin-associated protein (100 aa).

At 1-28 (MTTATTLGDAVFSLNMTRGEDALYKSSG) the chain is on the extracellular side. The chain crosses the membrane as a helical span at residues 29 to 49 (AIVAAIVVVVIIIVTLVLILL). Over 50 to 100 (KMYNRRMRTRRELEPKSPKPPVPPALDPSSNGSQQPATVTFDPANVHVETR) the chain is Cytoplasmic. Positions 58–100 (TRRELEPKSPKPPVPPALDPSSNGSQQPATVTFDPANVHVETR) are disordered.

In terms of processing, glycosylated. In terms of tissue distribution, found in the peripheral nervous system (PNS) Schwann cells (at protein level). Expressed in the PNS, primarily limited to Schwann cells.

It localises to the cell membrane. Plays a role in myelin formation. The protein is Noncompact myelin-associated protein (Ncmap) of Mus musculus (Mouse).